The following is a 948-amino-acid chain: Alanine--tRNA ligase (948 aa).

Zn(2+) contacts are provided by histidine 638, histidine 642, cysteine 739, and histidine 743.

The protein belongs to the class-II aminoacyl-tRNA synthetase family. The cofactor is Zn(2+).

The protein resides in the cytoplasm. It catalyses the reaction tRNA(Ala) + L-alanine + ATP = L-alanyl-tRNA(Ala) + AMP + diphosphate. Catalyzes the attachment of alanine to tRNA(Ala) in a two-step reaction: alanine is first activated by ATP to form Ala-AMP and then transferred to the acceptor end of tRNA(Ala). Also edits incorrectly charged Ser-tRNA(Ala) and Gly-tRNA(Ala) via its editing domain. In Paracidovorax citrulli (strain AAC00-1) (Acidovorax citrulli), this protein is Alanine--tRNA ligase.